The following is a 513-amino-acid chain: uncharacterized protein (513 aa).

A disordered region spans residues 1 to 48 (MGSSEEQSVPGDDFYEESGDLNTGLSLVLRPAKSNEGESSLSSPKGSK). The span at 37-48 (GESSLSSPKGSK) shows a compositional bias: polar residues. A phosphoserine mark is found at serine 43, serine 84, and serine 123. Disordered stretches follow at residues 210 to 229 (DGNH…GDLA), 236 to 287 (TRDS…GSKS), 390 to 414 (AKED…AEPP), and 453 to 481 (SVLS…TQGC).

This is an uncharacterized protein from Mus musculus (Mouse).